We begin with the raw amino-acid sequence, 324 residues long: Viral cathepsin (324 aa).

The N-terminal stretch at 1 to 16 (MNKIVLYLLVYGATLG) is a signal peptide. Residues 17-113 (AAYDLLKAPS…VVLDRPPDKG (97 aa)) constitute a propeptide, activation peptide. 3 disulfides stabilise this stretch: Cys134/Cys175, Cys168/Cys208, and Cys263/Cys311. Residue Cys137 is part of the active site. Asn159 is a glycosylation site (N-linked (GlcNAc...) asparagine; by host). Residues His270 and Asn290 contribute to the active site.

This sequence belongs to the peptidase C1 family. In terms of processing, synthesized as an inactive proenzyme and activated by proteolytic removal of the inhibitory propeptide.

The enzyme catalyses Endopeptidase of broad specificity, hydrolyzing substrates of both cathepsin L and cathepsin B.. Cysteine protease that plays an essential role in host liquefaction to facilitate horizontal transmission of the virus. May participate in the degradation of foreign protein expressed by the baculovirus system. The chain is Viral cathepsin (VCATH) from Antheraea pernyi nuclear polyhedrosis virus (ApNPV).